A 248-amino-acid polypeptide reads, in one-letter code: Functional amyloid sbunit FapE (248 aa).

The first 20 residues, 1–20 (MNTSRWLTALCLAASMPAYA), serve as a signal peptide directing secretion.

It belongs to the FapE family. As to quaternary structure, a minor component of purified amyloid fibrils. Fibrils are resistant to boiling in 2% (weight/vol) SDS and require &gt;90% (vol/vol) formic acid to dissolve.

It localises to the fimbrium. The protein localises to the secreted. In terms of biological role, a minor component of the functional amyloid in this bacterium. Upon overexpression of the endogenous six-gene locus (fapA-fapF) in situ, cells form large clumps during liquid growth, make large amounts of biofilm and produce amyloid fibrils. Expression of the 6 gene operon in E.coli strain BL21(DE3) induces flocculation and biofilm formation with copious extracellular fibrils. The chain is Functional amyloid sbunit FapE from Pseudomonas fluorescens.